A 179-amino-acid chain; its full sequence is Signal peptidase complex catalytic subunit SEC11A (179 aa).

At 1-16 (MLSLDFLDDVRRMNKR) the chain is on the cytoplasmic side. Residues 17–36 (QLYYQVLNFGMIVSSALMIW) traverse the membrane as a helical; Signal-anchor for type II membrane protein segment. The Lumenal segment spans residues 37-179 (KGLMVITGSE…LGLFVLVHRE (143 aa)). Catalysis depends on charge relay system residues serine 56, histidine 96, and aspartate 122. The segment at 165-176 (AVLFLLGLFVLV) is C-terminal short (CTS) helix.

Belongs to the peptidase S26B family. As to quaternary structure, component of the signal peptidase complex paralog A (SPC-A) composed of a catalytic subunit SEC11A and three accessory subunits SPCS1, SPCS2 and SPCS3. Within the complex, interacts with SPCS2 and SPCS3. The complex induces a local thinning of the ER membrane which is used to measure the length of the signal peptide (SP) h-region of protein substrates. This ensures the selectivity of the complex towards h-regions shorter than 18-20 amino acids.

It localises to the endoplasmic reticulum membrane. It catalyses the reaction Cleavage of hydrophobic, N-terminal signal or leader sequences from secreted and periplasmic proteins.. In terms of biological role, catalytic component of the signal peptidase complex (SPC) which catalyzes the cleavage of N-terminal signal sequences from nascent proteins as they are translocated into the lumen of the endoplasmic reticulum. Specifically cleaves N-terminal signal peptides that contain a hydrophobic alpha-helix (h-region) shorter than 18-20 amino acids. The protein is Signal peptidase complex catalytic subunit SEC11A (SEC11A) of Bos taurus (Bovine).